The following is a 161-amino-acid chain: Large ribosomal subunit protein uL10 (161 aa).

It belongs to the universal ribosomal protein uL10 family. Part of the ribosomal stalk of the 50S ribosomal subunit. The N-terminus interacts with L11 and the large rRNA to form the base of the stalk. The C-terminus forms an elongated spine to which L12 dimers bind in a sequential fashion forming a multimeric L10(L12)X complex.

In terms of biological role, forms part of the ribosomal stalk, playing a central role in the interaction of the ribosome with GTP-bound translation factors. This chain is Large ribosomal subunit protein uL10 (rplJ), found in Wigglesworthia glossinidia brevipalpis.